A 597-amino-acid chain; its full sequence is Elongation factor 4 (597 aa).

The tr-type G domain occupies 2–184 (KNIRNFSIIA…TVVQKIPAPK (183 aa)). Residues 14–19 (DHGKST) and 131–134 (NKID) contribute to the GTP site.

It belongs to the TRAFAC class translation factor GTPase superfamily. Classic translation factor GTPase family. LepA subfamily.

The protein localises to the cell inner membrane. The enzyme catalyses GTP + H2O = GDP + phosphate + H(+). In terms of biological role, required for accurate and efficient protein synthesis under certain stress conditions. May act as a fidelity factor of the translation reaction, by catalyzing a one-codon backward translocation of tRNAs on improperly translocated ribosomes. Back-translocation proceeds from a post-translocation (POST) complex to a pre-translocation (PRE) complex, thus giving elongation factor G a second chance to translocate the tRNAs correctly. Binds to ribosomes in a GTP-dependent manner. This is Elongation factor 4 from Laribacter hongkongensis (strain HLHK9).